The following is a 110-amino-acid chain: Cell cycle protein GpsB (110 aa).

Residues 32 to 73 (LDDVIKDYENYLEQIEKLQMENRRLQQALDKKESEASNVRNS) are a coiled coil.

Belongs to the GpsB family. Forms polymers through the coiled coil domains. Interacts with PBP1, MreC and EzrA.

It is found in the cytoplasm. Divisome component that associates with the complex late in its assembly, after the Z-ring is formed, and is dependent on DivIC and PBP2B for its recruitment to the divisome. Together with EzrA, is a key component of the system that regulates PBP1 localization during cell cycle progression. Its main role could be the removal of PBP1 from the cell pole after pole maturation is completed. Also contributes to the recruitment of PBP1 to the division complex. Not essential for septum formation. This is Cell cycle protein GpsB from Streptococcus agalactiae serotype Ia (strain ATCC 27591 / A909 / CDC SS700).